Here is a 252-residue protein sequence, read N- to C-terminus: Diphthine synthase (252 aa).

Residues L9, D85, V88, S113–I114, L165, A202, and H227 contribute to the S-adenosyl-L-methionine site.

This sequence belongs to the diphthine synthase family. In terms of assembly, homodimer.

It carries out the reaction 2-[(3S)-amino-3-carboxypropyl]-L-histidyl-[translation elongation factor 2] + 3 S-adenosyl-L-methionine = diphthine-[translation elongation factor 2] + 3 S-adenosyl-L-homocysteine + 3 H(+). The protein operates within protein modification; peptidyl-diphthamide biosynthesis. In terms of biological role, S-adenosyl-L-methionine-dependent methyltransferase that catalyzes the trimethylation of the amino group of the modified target histidine residue in translation elongation factor 2 (EF-2), to form an intermediate called diphthine. The three successive methylation reactions represent the second step of diphthamide biosynthesis. The polypeptide is Diphthine synthase (Methanospirillum hungatei JF-1 (strain ATCC 27890 / DSM 864 / NBRC 100397 / JF-1)).